Here is a 284-residue protein sequence, read N- to C-terminus: Tropomyosin-1 (284 aa).

The stretch at 1–284 forms a coiled coil; the sequence is MDAIKKKMLA…DSTFAELAGY (284 aa). The tract at residues 103–131 is disordered; sequence EERLQSATEKLEEASKAADESERGRKVLE.

It belongs to the tropomyosin family. As to quaternary structure, homodimer.

Tropomyosin, in association with the troponin complex, plays a central role in the calcium dependent regulation of muscle contraction. This Biomphalaria glabrata (Bloodfluke planorb) protein is Tropomyosin-1.